A 396-amino-acid polypeptide reads, in one-letter code: Elongation factor Tu (396 aa).

In terms of domain architecture, tr-type G spans 10–206 (KPHVNVGTIG…ALDTYIPTPE (197 aa)). Positions 19–26 (GHVDHGKT) are G1. Residue 19–26 (GHVDHGKT) participates in GTP binding. Residue T26 coordinates Mg(2+). The interval 60-64 (GITIN) is G2. A G3 region spans residues 81 to 84 (DCPG). GTP contacts are provided by residues 81-85 (DCPGH) and 136-139 (NKCD). The interval 136 to 139 (NKCD) is G4. The G5 stretch occupies residues 174 to 176 (SAK).

The protein belongs to the TRAFAC class translation factor GTPase superfamily. Classic translation factor GTPase family. EF-Tu/EF-1A subfamily. In terms of assembly, monomer.

It localises to the cytoplasm. The catalysed reaction is GTP + H2O = GDP + phosphate + H(+). Functionally, GTP hydrolase that promotes the GTP-dependent binding of aminoacyl-tRNA to the A-site of ribosomes during protein biosynthesis. In Burkholderia vietnamiensis (strain G4 / LMG 22486) (Burkholderia cepacia (strain R1808)), this protein is Elongation factor Tu.